The chain runs to 588 residues: Aspartate--tRNA ligase (588 aa).

Residue Glu177 participates in L-aspartate binding. The interval 201-204 (QLFK) is aspartate. Residue Arg223 coordinates L-aspartate. ATP is bound by residues 223–225 (RDE) and Gln232. His451 contributes to the L-aspartate binding site. Glu485 lines the ATP pocket. Arg492 is an L-aspartate binding site. 537–540 (GLDR) is an ATP binding site.

Belongs to the class-II aminoacyl-tRNA synthetase family. Type 1 subfamily. As to quaternary structure, homodimer.

The protein resides in the cytoplasm. It carries out the reaction tRNA(Asp) + L-aspartate + ATP = L-aspartyl-tRNA(Asp) + AMP + diphosphate. Catalyzes the attachment of L-aspartate to tRNA(Asp) in a two-step reaction: L-aspartate is first activated by ATP to form Asp-AMP and then transferred to the acceptor end of tRNA(Asp). The polypeptide is Aspartate--tRNA ligase (Staphylococcus aureus (strain MRSA252)).